The chain runs to 119 residues: Large ribosomal subunit protein P3 (119 aa).

The segment at 81–119 (GAAAGAASGGAAAEAPKAEEKKEEEKEESEDDLGFSLFD) is disordered. Positions 84 to 95 (AGAASGGAAAEA) are enriched in low complexity.

It belongs to the eukaryotic ribosomal protein P1/P2 family. Post-translationally, phosphorylated.

Its function is as follows. Plays an important role in the elongation step of protein synthesis. The polypeptide is Large ribosomal subunit protein P3 (Oryza sativa subsp. japonica (Rice)).